The chain runs to 395 residues: Elongation factor Tu (395 aa).

The tr-type G domain occupies 10–205 (KVHMNVGTIG…TMDEYFKDPV (196 aa)). The tract at residues 19-26 (GHVDHGKT) is G1. 19–26 (GHVDHGKT) serves as a coordination point for GTP. Threonine 26 lines the Mg(2+) pocket. The interval 60–64 (GITIN) is G2. Residues 81 to 84 (DCPG) are G3. Residues 81 to 85 (DCPGH) and 136 to 139 (NKVD) each bind GTP. The tract at residues 136–139 (NKVD) is G4. The tract at residues 173–175 (SAF) is G5.

It belongs to the TRAFAC class translation factor GTPase superfamily. Classic translation factor GTPase family. EF-Tu/EF-1A subfamily. Monomer.

The protein localises to the cytoplasm. The enzyme catalyses GTP + H2O = GDP + phosphate + H(+). Functionally, GTP hydrolase that promotes the GTP-dependent binding of aminoacyl-tRNA to the A-site of ribosomes during protein biosynthesis. The chain is Elongation factor Tu from Treponema denticola (strain ATCC 35405 / DSM 14222 / CIP 103919 / JCM 8153 / KCTC 15104).